Consider the following 373-residue polypeptide: 8-amino-7-oxononanoate synthase (373 aa).

Arg16 provides a ligand contact to substrate. 93–94 (GF) contacts pyridoxal 5'-phosphate. Substrate is bound at residue His118. Pyridoxal 5'-phosphate is bound by residues Ser165, 190 to 193 (DEAH), and 222 to 225 (TFSK). Lys225 bears the N6-(pyridoxal phosphate)lysine mark. Thr334 is a binding site for substrate.

This sequence belongs to the class-II pyridoxal-phosphate-dependent aminotransferase family. BioF subfamily. As to quaternary structure, homodimer. It depends on pyridoxal 5'-phosphate as a cofactor.

It carries out the reaction 6-carboxyhexanoyl-[ACP] + L-alanine + H(+) = (8S)-8-amino-7-oxononanoate + holo-[ACP] + CO2. It participates in cofactor biosynthesis; biotin biosynthesis. In terms of biological role, catalyzes the decarboxylative condensation of pimeloyl-[acyl-carrier protein] and L-alanine to produce 8-amino-7-oxononanoate (AON), [acyl-carrier protein], and carbon dioxide. In Helicobacter pylori (strain J99 / ATCC 700824) (Campylobacter pylori J99), this protein is 8-amino-7-oxononanoate synthase.